The primary structure comprises 267 residues: MPRAFLVKKPCVSTCKRNWSELPDEERGEIYVPVSLGFCPPQPYREPEASVAEPPSCPLALDMSLRDSSYSVAPGPCVVAQLPSEDVSHLTDPQSRDQGFLRTKMKVTLGDSPNGDLFTCHICQKSFTHQRMLNRHMKCHNDVKRHLCTYCGKGFNDTFDLKRHVRTHTGVRPYKCSLCDKAFTQRCSLESHLKKIHGVQQKYAYKERRAKLYVCEECGCTSESQEGHVLHLKERHPDSPLLRKTSKKVAVALQNTVTSLLQGSPHL.

C2H2-type zinc fingers lie at residues 118 to 140, 146 to 168, 174 to 197, and 213 to 236; these read FTCHICQKSFTHQRMLNRHMKCH, HLCTYCGKGFNDTFDLKRHVRTH, YKCSLCDKAFTQRCSLESHLKKIH, and YVCEECGCTSESQEGHVLHLKERH.

As to expression, expressed in skin, testis, kidney and weakly in lung. Not detected in heart, brain, spleen, liver and skeletal muscle.

It localises to the nucleus. Putative transcription factor. Involved in hair formation and spermatogenesis. May function in the differentiation and/or maintenance of the urogenital system. The polypeptide is Putative transcription factor Ovo-like 1 (Ovol1) (Mus musculus (Mouse)).